The primary structure comprises 153 residues: Prostaglandin E synthase (153 aa).

The Lumenal portion of the chain corresponds to Met1–Ala13. The helical transmembrane segment at Leu14 to Lys42 threads the bilayer. A glutathione-binding site is contributed by Arg39. The Cytoplasmic portion of the chain corresponds to Lys43–Arg61. A helical membrane pass occupies residues Asp62–Ser91. Position 74–78 (Arg74–Glu78) interacts with glutathione. Residues Phe92–Asp96 are Lumenal-facing. A helical membrane pass occupies residues Pro97–Gly120. Residues His114 and Tyr118 each coordinate glutathione. Residues Lys121–Ala124 lie on the Cytoplasmic side of the membrane. The chain crosses the membrane as a helical span at residues Pro125 to Leu153. Arg127–Tyr131 is a glutathione binding site.

Belongs to the MAPEG family. As to quaternary structure, homotrimer. Glutathione is required as a cofactor.

The protein localises to the membrane. It is found in the cytoplasm. The protein resides in the perinuclear region. It catalyses the reaction prostaglandin H2 = prostaglandin E2. The enzyme catalyses 2-glyceryl-prostaglandin H2 = 2-glyceryl-prostaglandin E2. The catalysed reaction is prostaglandin G2 = (15S)-15-hydroperoxy-prostaglandin E2. It carries out the reaction 1-chloro-2,4-dinitrobenzene + glutathione = 2,4-dinitrophenyl-S-glutathione + chloride + H(+). It catalyses the reaction (5S)-hydroperoxy-(6E,8Z,11Z,14Z)-eicosatetraenoate + 2 glutathione = (5S)-hydroxy-(6E,8Z,11Z,14Z)-eicosatetraenoate + glutathione disulfide + H2O. It functions in the pathway lipid metabolism; prostaglandin biosynthesis. Functionally, terminal enzyme of the cyclooxygenase (COX)-2-mediated prostaglandin E2 (PGE2) biosynthetic pathway. Catalyzes the glutathione-dependent oxidoreduction of prostaglandin endoperoxide H2 (PGH2) to prostaglandin E2 (PGE2) in response to inflammatory stimuli. Plays a key role in inflammation response, fever and pain. Also catalyzes the oxidoreduction of endocannabinoids into prostaglandin glycerol esters and PGG2 into 15-hydroperoxy-PGE2. In addition, displays low glutathione transferase and glutathione-dependent peroxidase activities, toward 1-chloro-2,4-dinitrobenzene and 5-hydroperoxyicosatetraenoic acid (5-HPETE), respectively. The protein is Prostaglandin E synthase (PTGES) of Equus caballus (Horse).